Reading from the N-terminus, the 573-residue chain is Flagellin B (573 aa).

This sequence belongs to the bacterial flagellin family. In terms of assembly, heteromer of FlaA and FlaB. A flagellar filament composed exclusively of FlaA is indistinguishable in length from that of the wild-type and shows a slight reduction in motility. The flagellar filament composed exclusively of the FlaB is severely truncated in length and greatly reduced in motility. Thus, while both flagellins are not necessary for motility, both are required for a fully active flagellar filament.

The protein localises to the secreted. It is found in the bacterial flagellum. Its function is as follows. Flagellin is the subunit protein which polymerizes to form the filaments of bacterial flagella. This Campylobacter coli protein is Flagellin B (flaB).